The chain runs to 27 residues: Cupiennin-3d (27 aa).

E27 is subject to Glutamic acid 1-amide.

In terms of tissue distribution, expressed by the venom gland.

It is found in the secreted. This is Cupiennin-3d from Cupiennius salei (American wandering spider).